A 466-amino-acid polypeptide reads, in one-letter code: 23S rRNA (uracil(1939)-C(5))-methyltransferase RlmD (466 aa).

The TRAM domain maps to 1 to 54 (MVDVLNIESLDLEARGIAHRDGKVLFVEGALPGERVTVQTVRRKPSYEIAKVEE). 4 residues coordinate [4Fe-4S] cluster: Cys67, Cys73, Cys76, and Cys155. Residues Gln264, Phe293, Asn298, Glu314, Asn342, and Asp363 each contribute to the S-adenosyl-L-methionine site. The active-site Nucleophile is Cys393.

This sequence belongs to the class I-like SAM-binding methyltransferase superfamily. RNA M5U methyltransferase family. RlmD subfamily.

The catalysed reaction is uridine(1939) in 23S rRNA + S-adenosyl-L-methionine = 5-methyluridine(1939) in 23S rRNA + S-adenosyl-L-homocysteine + H(+). Functionally, catalyzes the formation of 5-methyl-uridine at position 1939 (m5U1939) in 23S rRNA. The polypeptide is 23S rRNA (uracil(1939)-C(5))-methyltransferase RlmD (Bordetella bronchiseptica (strain ATCC BAA-588 / NCTC 13252 / RB50) (Alcaligenes bronchisepticus)).